A 421-amino-acid chain; its full sequence is Nuclear envelope integral membrane protein 2 (421 aa).

A signal peptide spans 1-22; it reads MLPRLWWLVLWLQPLATLPASA. 6 helical membrane passes run 64–84, 147–167, 175–195, 206–226, 238–258, and 281–301; these read YMWS…IVYI, NIVD…FLYA, VFYY…FVLL, TFGA…CQLM, MYIL…CYSH, and LVYT…VLLF.

Belongs to the NEMP family. In terms of tissue distribution, in the ovary, highly expressed in somatic cells.

Its subcellular location is the nucleus inner membrane. This Mus musculus (Mouse) protein is Nuclear envelope integral membrane protein 2 (Nemp2).